The following is a 256-amino-acid chain: Chitinase 11 (256 aa).

The first 22 residues, 1 to 22 (MRRLLPLAGATLLIAAAGGASG), serve as a signal peptide directing secretion. Disulfide bonds link Cys-48–Cys-109 and Cys-214–Cys-247. Catalysis depends on Glu-91, which acts as the Proton donor.

The protein belongs to the glycosyl hydrolase 19 family. Chitinase class II subfamily. In terms of tissue distribution, expressed in leaves and at lower levels in roots, sheaths and meristems.

The catalysed reaction is Random endo-hydrolysis of N-acetyl-beta-D-glucosaminide (1-&gt;4)-beta-linkages in chitin and chitodextrins.. This Oryza sativa subsp. japonica (Rice) protein is Chitinase 11 (Cht11).